A 512-amino-acid polypeptide reads, in one-letter code: MKTYKPYRHQLRRSLFASTIFPVFMVMIIGLISFYAIYIWVEHRTIHQHTYQTQTELQRIDKHFHTFVTQQQKQWRHVDLSHPADITKMKRQLLKQVHQQPAILYYDLKGSSQSFTNNYEQLDTTKMYLISKYRIDFKDDTYILKIYMSSTPLLKNIKKNSGQSALIVDSYDTVLYTNDDRFSIGQKYQPPQFGFMNESLKLNSHHAHLIIYKDIHETIEDGIALLVVMGVVLILLVIFGYISADRMAKRQSEDIEAIVRKIDDAKNRHLGSYEPLKKHSELEEINNYIYDLFESNEQLIQSIEQTERRLRDIQLKEIERQFQPHFLFNTMQTIQYLIPLSPKVAQTVIQQLSQMLRYSLRTASHTVKLAEELSYIEQYVAIQNIRFDDMIQLYIDATEGVQHQTIGKMMLQPLVENAIKHGRDSEPLKITIRIRLTKRKLHILVHDNGIGMSPSHLEHVRQSLHHDVFDTTHLGLNHLHNRAMIQYGTYARLHIFSRSQQGTLMCYQIPLV.

The next 2 membrane-spanning stretches (helical) occupy residues 20–40 (IFPV…IYIW) and 222–242 (GIAL…FGYI). The Histidine kinase domain maps to 297–512 (EQLIQSIEQT…TLMCYQIPLV (216 aa)). Position 325 is a phosphohistidine; by autocatalysis (H325).

Autophosphorylated.

It localises to the cell membrane. It catalyses the reaction ATP + protein L-histidine = ADP + protein N-phospho-L-histidine.. Functionally, probable member of the two-component regulatory system SE_0166/SE_0165. May activate SE_0165 by phosphorylation. This is an uncharacterized protein from Staphylococcus epidermidis (strain ATCC 12228 / FDA PCI 1200).